The following is a 198-amino-acid chain: Potassium-transporting ATPase KdpC subunit (198 aa).

Residues 8 to 28 (ILAVLVFTILCGIIYPVSTTV) form a helical membrane-spanning segment.

This sequence belongs to the KdpC family. In terms of assembly, the system is composed of three essential subunits: KdpA, KdpB and KdpC.

It localises to the cell membrane. Functionally, part of the high-affinity ATP-driven potassium transport (or Kdp) system, which catalyzes the hydrolysis of ATP coupled with the electrogenic transport of potassium into the cytoplasm. This subunit acts as a catalytic chaperone that increases the ATP-binding affinity of the ATP-hydrolyzing subunit KdpB by the formation of a transient KdpB/KdpC/ATP ternary complex. This Clostridium perfringens (strain ATCC 13124 / DSM 756 / JCM 1290 / NCIMB 6125 / NCTC 8237 / Type A) protein is Potassium-transporting ATPase KdpC subunit.